The sequence spans 106 residues: MNTFRKTYVLKLYVAGNTPNSVRALKTLKTILEQEFQGVYALKVIDVLKNPQLAEEDKILATPTLAKVLPPPVRKIIGDLSDREKVLIGLDLLYDEIQDRESELDF.

Belongs to the KaiB family. The KaiABC complex composition changes during the circadian cycle to control KaiC phosphorylation. Complexes KaiC(6), KaiA(2-4):KaiC(6), KaiB(6):KaiC(6) and KaiC(6):KaiB(6):KaiA(12) are among the most important forms, many form cooperatively. Undergoes a major conformational rearrangment; in the free state forms homotetramers as a dimer of dimers. When bound to the CI domain of KaiC switches to a monomeric thioredoxin-fold (KaiB(fs)). KaiB(fs) binds CikA, leading it to dephosphorylate phospho-RpaA.

Its function is as follows. Key component of the KaiABC oscillator complex, which constitutes the main circadian regulator in cyanobacteria. Complex composition changes during the circadian cycle to control KaiC phosphorylation. KaiA stimulates KaiC autophosphorylation, while KaiB sequesters KaiA, leading to KaiC autodephosphorylation. Phospho-Ser-431 KaiC accumulation triggers binding of KaiB to form the KaiB(6):KaiC(6) complex, leading to changes in output regulators CikA and SasA. KaiB switches to a thioredoxin-like fold (KaiB(fs)) when bound to KaiC. KaiB(6):KaiC(6) formation exposes a site for KaiA binding that sequesters KaiA from KaiC, making the KaiC(6):KaiB(6):KaiA(12) complex that results in KaiC autodephosphorylation. A metamorphic protein which reversibly switches between an inactive tetrameric fold and a rare, thioredoxin-like monomeric fold (KaiB(fs)). KaiB(fs) binds phospho-KaiC, KaiA and CikA. KaiA and CikA compete for binding to KaiB(fs), and KaiB(fs) and SasA compete for binding to KaiC, thus the clock oscillator and output signal pathway are tightly coupled. This is Circadian clock oscillator protein KaiB from Gloeothece citriformis (strain PCC 7424) (Cyanothece sp. (strain PCC 7424)).